The sequence spans 146 residues: Hemoglobin subunit beta (146 aa).

V1 is subject to N-acetylvaline. In terms of domain architecture, Globin spans 2-146; sequence HLTADEKAAV…VATALAHKYH (145 aa). Position 12 is a phosphothreonine (T12). S44 bears the Phosphoserine mark. K59 carries the N6-acetyllysine modification. H63 contributes to the heme b binding site. An N6-acetyllysine modification is found at K82. Position 92 (H92) interacts with heme b. Position 93 is an S-nitrosocysteine (C93). K144 carries the N6-acetyllysine modification.

Belongs to the globin family. In terms of assembly, heterotetramer of two alpha chains and two beta chains. Red blood cells.

Its function is as follows. Involved in oxygen transport from the lung to the various peripheral tissues. The polypeptide is Hemoglobin subunit beta (HBB) (Cephalopachus bancanus (Western tarsier)).